The sequence spans 494 residues: MELSVLLLLALLTGLLLLMARGHPKAYGHLPPGPRPLPILGNFLQMDRKGLLKSFLRLQEKYGDVFTVYLGPRRTVMLCGIDAIREALVDNAEAFSGRGKIAVVEPVFQGYGVVFANGERWKTLRRFSLATMRDFGMGKRSVEERIQEEAQCLVEELRKTEGVLQDPTFFFHSMTANIICSIVFGKRFGYKDPEFLRLMNLFYVSFALISSFSSQMFELFHSFLKYFPGTHRQVYNNLQEIKAFIARMVEKHRETLDPSAPRDFIDAYLIRMDKEKAEPSSEFHHRNLIDTALSLFFAGTETTSTTLRYGFLLMLKYPHIAERIYKEIDQVIGPHRLPSLDDRAKMPYTDAVIHEIQRFGDLLPIGVPHMVTKDICFRGYIIPKGTEVFPILHSALNDPHYFEKPDVFNPDHFLDANGALKKNEAFIPFSIGKRICLGEGIARMELFLFFTTILQNFSVASPMAPEDIDLTPQEIGVGKLPPVYQISFLSRGGC.

Ser128 carries the post-translational modification Phosphoserine; by PKA. Cys436 is a binding site for heme.

This sequence belongs to the cytochrome P450 family. The cofactor is heme.

The protein localises to the endoplasmic reticulum membrane. Its subcellular location is the microsome membrane. It carries out the reaction an organic molecule + reduced [NADPH--hemoprotein reductase] + O2 = an alcohol + oxidized [NADPH--hemoprotein reductase] + H2O + H(+). Functionally, cytochromes P450 are a group of heme-thiolate monooxygenases. In liver microsomes, this enzyme is involved in an NADPH-dependent electron transport pathway. This isozyme seems responsible for metabolism of 2,2',4,4',5,5'-hexachlorobiphenyl. In Canis lupus familiaris (Dog), this protein is Cytochrome P450 2B11 (CYP2B11).